Reading from the N-terminus, the 233-residue chain is Phosphoribosylformylglycinamidine synthase subunit PurQ (233 aa).

Positions 3-233 constitute a Glutamine amidotransferase type-1 domain; that stretch reads SAVLVFPGIN…GLVAHLERAA (231 aa). Catalysis depends on C87, which acts as the Nucleophile. Residues H204 and E206 contribute to the active site.

In terms of assembly, part of the FGAM synthase complex composed of 1 PurL, 1 PurQ and 2 PurS subunits.

Its subcellular location is the cytoplasm. The enzyme catalyses N(2)-formyl-N(1)-(5-phospho-beta-D-ribosyl)glycinamide + L-glutamine + ATP + H2O = 2-formamido-N(1)-(5-O-phospho-beta-D-ribosyl)acetamidine + L-glutamate + ADP + phosphate + H(+). It carries out the reaction L-glutamine + H2O = L-glutamate + NH4(+). The protein operates within purine metabolism; IMP biosynthesis via de novo pathway; 5-amino-1-(5-phospho-D-ribosyl)imidazole from N(2)-formyl-N(1)-(5-phospho-D-ribosyl)glycinamide: step 1/2. Its function is as follows. Part of the phosphoribosylformylglycinamidine synthase complex involved in the purines biosynthetic pathway. Catalyzes the ATP-dependent conversion of formylglycinamide ribonucleotide (FGAR) and glutamine to yield formylglycinamidine ribonucleotide (FGAM) and glutamate. The FGAM synthase complex is composed of three subunits. PurQ produces an ammonia molecule by converting glutamine to glutamate. PurL transfers the ammonia molecule to FGAR to form FGAM in an ATP-dependent manner. PurS interacts with PurQ and PurL and is thought to assist in the transfer of the ammonia molecule from PurQ to PurL. This chain is Phosphoribosylformylglycinamidine synthase subunit PurQ, found in Nitrobacter winogradskyi (strain ATCC 25391 / DSM 10237 / CIP 104748 / NCIMB 11846 / Nb-255).